The sequence spans 246 residues: Exosome complex component Rrp41 (246 aa).

The protein belongs to the RNase PH family. Rrp41 subfamily. As to quaternary structure, component of the archaeal exosome complex. Forms a hexameric ring-like arrangement composed of 3 Rrp41-Rrp42 heterodimers. The hexameric ring associates with a trimer of Rrp4 and/or Csl4 subunits.

Its subcellular location is the cytoplasm. In terms of biological role, catalytic component of the exosome, which is a complex involved in RNA degradation. Has 3'-&gt;5' exoribonuclease activity. Can also synthesize heteromeric RNA-tails. The sequence is that of Exosome complex component Rrp41 from Pyrobaculum aerophilum (strain ATCC 51768 / DSM 7523 / JCM 9630 / CIP 104966 / NBRC 100827 / IM2).